The primary structure comprises 858 residues: Myosin-K heavy chain (858 aa).

The Myosin motor domain occupies 7-820; it reads SGVDDLVLVS…TIFVMEDLLM (814 aa). 100–107 lines the ATP pocket; it reads GESGAGKT. Positions 121 to 265 are disordered; sequence SPNNSSGGGI…GGGYGGSSKT (145 aa). Composition is skewed to gly residues over residues 126-139 and 157-182; these read SGGGIGGSGGGNGG and RGMGMPGMVGRGGLPTRGGGPPSRGG. Residues 183-228 are compositionally biased toward pro residues; that stretch reads GPPPTRGRGGPPPPIPQNRGAPPPVSNGGAPPPVARGPVAPPPTRG. Residues 233 to 245 show a composition bias toward gly residues; the sequence is RGGGPANRGGRGG. The actin-binding stretch occupies residues 712–722; the sequence is PHYIRCIKPND. The interval 821 to 858 is tail; that stretch reads QKIDPIGYKNRVQAYKENEKLAQMKQGKHSMKQKCLIQ.

This sequence belongs to the TRAFAC class myosin-kinesin ATPase superfamily. Myosin family.

It localises to the cytoplasm. Myosins are actin-based motor molecules with ATPase activity. Involved in phagocytosis and motility, and in the maintenance and dynamics of cell cortex. The chain is Myosin-K heavy chain (myoK) from Dictyostelium discoideum (Social amoeba).